The chain runs to 38 residues: Cytochrome b6-f complex subunit 5 (38 aa).

A helical transmembrane segment spans residues 5–25; the sequence is LLCGIVLGLIPVTLLGLFVDA.

The protein belongs to the PetG family. The 4 large subunits of the cytochrome b6-f complex are cytochrome b6, subunit IV (17 kDa polypeptide, PetD), cytochrome f and the Rieske protein, while the 4 small subunits are PetG, PetL, PetM and PetN. The complex functions as a dimer.

The protein localises to the cellular thylakoid membrane. Component of the cytochrome b6-f complex, which mediates electron transfer between photosystem II (PSII) and photosystem I (PSI), cyclic electron flow around PSI, and state transitions. PetG is required for either the stability or assembly of the cytochrome b6-f complex. The chain is Cytochrome b6-f complex subunit 5 from Prochlorococcus marinus (strain MIT 9313).